The primary structure comprises 174 residues: Co-chaperone protein HscB (174 aa).

One can recognise a J domain in the interval 2–74 (NYFTLFDLPR…LNRAIYFLCL (73 aa)).

The protein belongs to the HscB family. Interacts with HscA and stimulates its ATPase activity. Interacts with IscU.

In terms of biological role, co-chaperone involved in the maturation of iron-sulfur cluster-containing proteins. Seems to help targeting proteins to be folded toward HscA. The chain is Co-chaperone protein HscB from Buchnera aphidicola subsp. Acyrthosiphon pisum (strain Tuc7).